Here is a 1363-residue protein sequence, read N- to C-terminus: Collagen alpha-2(I) chain (1363 aa).

The N-terminal stretch at 1 to 22 (MLSFVDTRILLLLAVTSYLATS) is a signal peptide. Glutamine 23 carries the post-translational modification Pyrrolidone carboxylic acid. A propeptide spans 23–77 (QHLFQASAGRKGPRGDKGPQGERGPPGPPGRDGEDGPPGPPGPPGPPGLGGNFAA) (N-terminal propeptide). Residues 28–1110 (ASAGRKGPRG…GPNGGGYEVG (1083 aa)) are disordered. The span at 59–69 (PPGPPGPPGPP) shows a compositional bias: pro residues. The residue at position 78 (glutamine 78) is a Pyrrolidone carboxylic acid. An Allysine modification is found at lysine 83. Positions 88-97 (GPGPMGLMGP) are enriched in low complexity. The span at 98 to 110 (RGPPGASGPPGPP) shows a compositional bias: pro residues. Residues 112 to 128 (FQGVPGEPGEPGQTGPQ) show a composition bias toward low complexity. The segment covering 140–154 (AGEDGHPGKPGRPGE) has biased composition (basic and acidic residues). The residue at position 176 (lysine 176) is a 5-hydroxylysine; alternate. An O-linked (Gal...) hydroxylysine; alternate glycan is attached at lysine 176. Low complexity-rich tracts occupy residues 224-263 (IGAP…PGAK) and 299-320 (PGAN…AGAP). A compositionally biased stretch (pro residues) spans 322–335 (LPGPRGIPGPPGPA). A 4-hydroxyproline mark is found at proline 440 and proline 443. Composition is skewed to low complexity over residues 601–610 (PAGPIGSRGP) and 674–683 (RGLPGAIGAP). Over residues 684-699 (GPAGGAGDRGEGGPAG) the composition is skewed to gly residues. A compositionally biased stretch (low complexity) spans 721-736 (PSGFAGPPGAAGQPGA). Basic and acidic residues predominate over residues 737 to 746 (KGERGPKGPK). Composition is skewed to low complexity over residues 748-794 (ETGP…AGRV), 842-875 (AGEK…LGLP), 898-931 (VSGP…NPGN), 955-965 (PSGALGAPGPH), and 986-995 (VGPAGAFGPR). Basic and acidic residues predominate over residues 1004-1015 (RGEKGEPGDKGH). The segment covering 1036-1049 (QHGDQGPPGNNGPA) has biased composition (low complexity). Pro residues-rich tracts occupy residues 1051–1060 (PRGPPGPSGP) and 1088–1102 (AGPP…PPGP). A propeptide spans 1118–1363 (ADQPSLRPKD…GLHIGPVCFK (246 aa)) (C-terminal propeptide). The region spanning 1128-1363 (YEVDATLKTL…GLHIGPVCFK (236 aa)) is the Fibrillar collagen NC1 domain. Cystine bridges form between cysteine 1158–cysteine 1190, cysteine 1198–cysteine 1361, and cysteine 1269–cysteine 1314. Residues aspartate 1176, asparagine 1178, glutamine 1179, cysteine 1181, and aspartate 1184 each contribute to the Ca(2+) site. A glycan (N-linked (GlcNAc...) asparagine) is linked at asparagine 1264.

It belongs to the fibrillar collagen family. As to quaternary structure, trimers of one alpha 2(I) and two alpha 1(I) chains. In terms of processing, prolines at the third position of the tripeptide repeating unit (G-X-Y) are hydroxylated in some or all of the chains. The N-terminus of the mature protein is blocked. As to expression, forms the fibrils of tendon, ligaments and bones. In bones the fibrils are mineralized with calcium hydroxyapatite.

The protein resides in the secreted. It localises to the extracellular space. Its subcellular location is the extracellular matrix. Its function is as follows. Type I collagen is a member of group I collagen (fibrillar forming collagen). The chain is Collagen alpha-2(I) chain (COL1A2) from Gallus gallus (Chicken).